The chain runs to 371 residues: UDP-N-acetylglucosamine--N-acetylmuramyl-(pentapeptide) pyrophosphoryl-undecaprenol N-acetylglucosamine transferase (371 aa).

Residues 15–17 (TGG), Asn126, Arg172, Ser199, Ile256, 275–280 (ALTVSE), and Gln301 each bind UDP-N-acetyl-alpha-D-glucosamine.

The protein belongs to the glycosyltransferase 28 family. MurG subfamily.

It is found in the cell inner membrane. It carries out the reaction di-trans,octa-cis-undecaprenyl diphospho-N-acetyl-alpha-D-muramoyl-L-alanyl-D-glutamyl-meso-2,6-diaminopimeloyl-D-alanyl-D-alanine + UDP-N-acetyl-alpha-D-glucosamine = di-trans,octa-cis-undecaprenyl diphospho-[N-acetyl-alpha-D-glucosaminyl-(1-&gt;4)]-N-acetyl-alpha-D-muramoyl-L-alanyl-D-glutamyl-meso-2,6-diaminopimeloyl-D-alanyl-D-alanine + UDP + H(+). It functions in the pathway cell wall biogenesis; peptidoglycan biosynthesis. In terms of biological role, cell wall formation. Catalyzes the transfer of a GlcNAc subunit on undecaprenyl-pyrophosphoryl-MurNAc-pentapeptide (lipid intermediate I) to form undecaprenyl-pyrophosphoryl-MurNAc-(pentapeptide)GlcNAc (lipid intermediate II). In Francisella philomiragia subsp. philomiragia (strain ATCC 25017 / CCUG 19701 / FSC 153 / O#319-036), this protein is UDP-N-acetylglucosamine--N-acetylmuramyl-(pentapeptide) pyrophosphoryl-undecaprenol N-acetylglucosamine transferase.